The sequence spans 202 residues: Protein-methionine-sulfoxide reductase heme-binding subunit MsrQ (202 aa).

Helical transmembrane passes span Ile-8–Trp-28, Leu-82–Ile-102, Pro-116–Thr-136, Leu-149–Val-169, and Ile-171–Tyr-191.

This sequence belongs to the MsrQ family. Heterodimer of a catalytic subunit (MsrP) and a heme-binding subunit (MsrQ). FMN is required as a cofactor. It depends on heme b as a cofactor.

It localises to the cell inner membrane. In terms of biological role, part of the MsrPQ system that repairs oxidized periplasmic proteins containing methionine sulfoxide residues (Met-O), using respiratory chain electrons. Thus protects these proteins from oxidative-stress damage caused by reactive species of oxygen and chlorine generated by the host defense mechanisms. MsrPQ is essential for the maintenance of envelope integrity under bleach stress, rescuing a wide series of structurally unrelated periplasmic proteins from methionine oxidation. MsrQ provides electrons for reduction to the reductase catalytic subunit MsrP, using the quinone pool of the respiratory chain. The chain is Protein-methionine-sulfoxide reductase heme-binding subunit MsrQ from Klebsiella pneumoniae subsp. pneumoniae (strain ATCC 700721 / MGH 78578).